A 342-amino-acid polypeptide reads, in one-letter code: MKALEKSKPEEGLWMVQAPVPEIGPDDVLIKIKKTGICGTDIHIWNWDEWAAHTVPVPMITGHEFAGEIVELGRDVTGLSIGQRVSGEGHLIGTESRQSRAGKFHLDPGTRGIGVNVQGAFAQYLRLPAFNVVPLPEDIPDEIGAILDPLGNAVHTALSFDLLGEDVLITGAGPIGIMAAAVAKHAGARHVVITDINADRLKLAQHVVPRARTVDVTREDLGDVVHELGLKQGFDVGLEMSGSQAALDQMVEALVMGGKIALLGIPPGKSPVDWSRIVFKAITIKGVYGREMFETWYKMIAMLQNGLDVSRVITHRFGVDEFREGFAAMKSGLSGKVVLDWT.

Cysteine 38 contributes to the Zn(2+) binding site. Active-site charge relay system residues include threonine 40 and histidine 43. The Zn(2+) site is built by histidine 63 and glutamate 64. NAD(+) contacts are provided by residues isoleucine 175, aspartate 195, arginine 200, leucine 263–isoleucine 265, and valine 287–tyrosine 288.

Belongs to the zinc-containing alcohol dehydrogenase family. As to quaternary structure, homotetramer. Zn(2+) is required as a cofactor.

Its subcellular location is the cytoplasm. It carries out the reaction L-threonine + NAD(+) = (2S)-2-amino-3-oxobutanoate + NADH + H(+). The protein operates within amino-acid degradation; L-threonine degradation via oxydo-reductase pathway; glycine from L-threonine: step 1/2. Functionally, catalyzes the NAD(+)-dependent oxidation of L-threonine to 2-amino-3-ketobutyrate. The protein is L-threonine 3-dehydrogenase of Ruegeria pomeroyi (strain ATCC 700808 / DSM 15171 / DSS-3) (Silicibacter pomeroyi).